The sequence spans 138 residues: Transcription antitermination protein NusB (138 aa).

Belongs to the NusB family.

Functionally, involved in transcription antitermination. Required for transcription of ribosomal RNA (rRNA) genes. Binds specifically to the boxA antiterminator sequence of the ribosomal RNA (rrn) operons. This chain is Transcription antitermination protein NusB, found in Coxiella burnetii (strain CbuK_Q154) (Coxiella burnetii (strain Q154)).